Here is a 359-residue protein sequence, read N- to C-terminus: NAC domain-containing protein 45 (359 aa).

The region spanning leucine 19–lysine 185 is the NAC domain. A DNA-binding region spans residues valine 130 to glutamate 191.

In terms of tissue distribution, expressed in roots. Expressed at low levels in leaves, stems and panicles.

The protein resides in the nucleus. Transcription activator involved in responses to drought stress and salt stress. Transactivates the stress response genes LEA19 and PM19L. This Oryza sativa subsp. japonica (Rice) protein is NAC domain-containing protein 45.